A 234-amino-acid chain; its full sequence is Phosphoribosylaminoimidazole-succinocarboxamide synthase (234 aa).

This sequence belongs to the SAICAR synthetase family.

It carries out the reaction 5-amino-1-(5-phospho-D-ribosyl)imidazole-4-carboxylate + L-aspartate + ATP = (2S)-2-[5-amino-1-(5-phospho-beta-D-ribosyl)imidazole-4-carboxamido]succinate + ADP + phosphate + 2 H(+). Its pathway is purine metabolism; IMP biosynthesis via de novo pathway; 5-amino-1-(5-phospho-D-ribosyl)imidazole-4-carboxamide from 5-amino-1-(5-phospho-D-ribosyl)imidazole-4-carboxylate: step 1/2. The protein is Phosphoribosylaminoimidazole-succinocarboxamide synthase of Pyrobaculum aerophilum (strain ATCC 51768 / DSM 7523 / JCM 9630 / CIP 104966 / NBRC 100827 / IM2).